Consider the following 197-residue polypeptide: Rac-like GTP-binding protein 5 (197 aa).

Residue 13 to 20 (GDGAVGKT) coordinates GTP. Residues 35–43 (YVPTVFDNF) carry the Effector region motif. GTP is bound by residues 60 to 64 (DTAGQ) and 118 to 121 (TKLD). C194 carries the cysteine methyl ester modification. C194 carries the S-geranylgeranyl cysteine lipid modification. A propeptide spans 195–197 (AIL) (removed in mature form).

The protein belongs to the small GTPase superfamily. Rho family.

Its subcellular location is the cytoplasm. It is found in the membrane. Its function is as follows. Inactive GDP-bound Rho GTPases reside in the cytosol, are found in a complex with Rho GDP-dissociation inhibitors (Rho GDIs), and are released from the GDI protein in order to translocate to membranes upon activation. This is Rac-like GTP-binding protein 5 (RAC5) from Oryza sativa subsp. japonica (Rice).